An 861-amino-acid chain; its full sequence is Benzylsuccinate synthase alpha subunit (861 aa).

The region spanning T40–G712 is the PFL domain. The tract at residues T718–P744 is disordered. Residues G731–N850 form the Glycine radical domain. G825 carries the post-translational modification Glycine radical.

It belongs to the glycyl radical enzyme (GRE) family. BSS subfamily. In terms of assembly, heterohexamer composed of 2 alpha subunits, 2 beta subunits and 2 gamma subunits.

The catalysed reaction is toluene + fumarate = 2-benzylsuccinate. Its pathway is xenobiotic degradation; toluene degradation. Activated by the benzylsuccinate synthase activating enzyme BssD. Rapidly inactivated by oxygen. Functionally, catalyzes the addition of fumarate to the methyl group of toluene, leading to the formation of benzylsuccinate. In Thauera aromatica, this protein is Benzylsuccinate synthase alpha subunit (bssA).